The primary structure comprises 343 residues: Holliday junction branch migration complex subunit RuvB (343 aa).

The segment at 4 to 193 (TDNLTAAQPQ…FGIVSRLEFY (190 aa)) is large ATPase domain (RuvB-L). ATP is bound by residues L32, R33, G74, K77, T78, T79, 140–142 (EDY), R183, Y193, and R230. T78 contacts Mg(2+). Residues 194-264 (ENRDLATIVS…IADAALSMLD (71 aa)) are small ATPAse domain (RuvB-S). The segment at 267–343 (VQGLDVMDRK…YLHFGLPVEK (77 aa)) is head domain (RuvB-H). DNA is bound by residues R322 and R327.

The protein belongs to the RuvB family. As to quaternary structure, homohexamer. Forms an RuvA(8)-RuvB(12)-Holliday junction (HJ) complex. HJ DNA is sandwiched between 2 RuvA tetramers; dsDNA enters through RuvA and exits via RuvB. An RuvB hexamer assembles on each DNA strand where it exits the tetramer. Each RuvB hexamer is contacted by two RuvA subunits (via domain III) on 2 adjacent RuvB subunits; this complex drives branch migration. In the full resolvosome a probable DNA-RuvA(4)-RuvB(12)-RuvC(2) complex forms which resolves the HJ.

The protein localises to the cytoplasm. The enzyme catalyses ATP + H2O = ADP + phosphate + H(+). Its function is as follows. The RuvA-RuvB-RuvC complex processes Holliday junction (HJ) DNA during genetic recombination and DNA repair, while the RuvA-RuvB complex plays an important role in the rescue of blocked DNA replication forks via replication fork reversal (RFR). RuvA specifically binds to HJ cruciform DNA, conferring on it an open structure. The RuvB hexamer acts as an ATP-dependent pump, pulling dsDNA into and through the RuvAB complex. RuvB forms 2 homohexamers on either side of HJ DNA bound by 1 or 2 RuvA tetramers; 4 subunits per hexamer contact DNA at a time. Coordinated motions by a converter formed by DNA-disengaged RuvB subunits stimulates ATP hydrolysis and nucleotide exchange. Immobilization of the converter enables RuvB to convert the ATP-contained energy into a lever motion, pulling 2 nucleotides of DNA out of the RuvA tetramer per ATP hydrolyzed, thus driving DNA branch migration. The RuvB motors rotate together with the DNA substrate, which together with the progressing nucleotide cycle form the mechanistic basis for DNA recombination by continuous HJ branch migration. Branch migration allows RuvC to scan DNA until it finds its consensus sequence, where it cleaves and resolves cruciform DNA. The protein is Holliday junction branch migration complex subunit RuvB of Neisseria meningitidis serogroup A / serotype 4A (strain DSM 15465 / Z2491).